Consider the following 457-residue polypeptide: Secreted RxLR effector protein 8 (457 aa).

Positions methionine 1–threonine 19 are cleaved as a signal peptide. A RxLR-dEER motif is present at residues arginine 48–arginine 69. The N-linked (GlcNAc...) asparagine glycan is linked to asparagine 68. Disordered regions lie at residues arginine 110–serine 188 and arginine 398–serine 457. A compositionally biased stretch (low complexity) spans serine 135–serine 152. Composition is skewed to polar residues over residues asparagine 153 to leucine 163 and serine 176 to lysine 187. A compositionally biased stretch (basic residues) spans isoleucine 442–serine 457.

The protein belongs to the RxLR effector family.

The protein localises to the secreted. The protein resides in the host nucleus. Functionally, secreted effector that completely suppresses the host cell death induced by cell death-inducing proteins. The sequence is that of Secreted RxLR effector protein 8 from Plasmopara viticola (Downy mildew of grapevine).